The sequence spans 491 residues: Trigger factor (491 aa).

One can recognise a PPIase FKBP-type domain in the interval 173 to 260 (GDVAVVSFSG…LDELKGRELP (88 aa)). Residues 435–491 (MVDPASEDKPAKASKAKSSKAKAEKEPAAEGQAKAKPAAKTSKSKTKAAEKLITPID) are disordered. Residues 463 to 475 (AEGQAKAKPAAKT) are compositionally biased toward low complexity.

Belongs to the FKBP-type PPIase family. Tig subfamily.

Its subcellular location is the cytoplasm. The catalysed reaction is [protein]-peptidylproline (omega=180) = [protein]-peptidylproline (omega=0). Functionally, involved in protein export. Acts as a chaperone by maintaining the newly synthesized protein in an open conformation. Functions as a peptidyl-prolyl cis-trans isomerase. This is Trigger factor from Synechococcus sp. (strain RCC307).